Reading from the N-terminus, the 122-residue chain is Large ribosomal subunit protein uL14c (122 aa).

Belongs to the universal ribosomal protein uL14 family. As to quaternary structure, part of the 50S ribosomal subunit.

The protein localises to the plastid. The protein resides in the chloroplast. Its function is as follows. Binds to 23S rRNA. This chain is Large ribosomal subunit protein uL14c, found in Stigeoclonium helveticum (Green alga).